The sequence spans 614 residues: Vitamin B12 transporter BtuB (614 aa).

Residues 1-20 form the signal peptide; the sequence is MIKKASLLTACSVTAFSAWA. A TonB box motif is present at residues 26 to 33; it reads DTLVVTAN. One can recognise a TBDR plug domain in the interval 38–152; that stretch reads PRSTVLAPTT…IGGVVNIITT (115 aa). Residues leucine 83, serine 85, asparagine 92, and 110–111 contribute to the cyanocob(III)alamin site; that span reads VS. The TBDR beta-barrel domain occupies 155–614; it reads HPGTEISAGW…EYTLSGSYTF (460 aa). The next 3 beta stranded transmembrane spans lie at 158 to 165, 169 to 178, and 184 to 195; these read TEISAGWG, YQNYDVSTQQ, and TRVTLLGDYAHT. Ca(2+) is bound by residues aspartate 199, glutamine 211, aspartate 213, and aspartate 215. 2 consecutive transmembrane segments (beta stranded) span residues 217–227 and 232–248; these read FLSKTLYGALE and DVWSGFVRGYGYDNRTN. Ca(2+) is bound by residues tyrosine 249 and aspartate 250. Alanine 251 provides a ligand contact to cyanocob(III)alamin. Position 261 (aspartate 261) interacts with Ca(2+). The next 14 membrane-spanning stretches (beta stranded) occupy residues 263-277, 279-296, 309-325, 328-337, 353-369, 371-381, 385-400, 403-417, 434-443, 449-458, 473-490, 494-509, 517-529, and 535-550; these read RKLYSQSWDAGLRYN, ELIKSQLITSYSHSKDYN, TLDEMKQYTVQWANNII, HGNIGAGVDW, YDQRNTGIYLTGLQQVG, FTFEGAGRSDD, FGRHGTWQTSAGWEFI, YRFIASYGTSYKAPN, KSKQWEGAFE, VNWRISGYRN, YYNEGKARIKGVEATANF, PLTHTVSYDYVDARNA, RRAKQQVKYQLDW, and DWGITYQYLGTRYDKD. Threonine 309 serves as a coordination point for cyanocob(III)alamin. Arginine 517 is a binding site for cyanocob(III)alamin. Position 551 (tyrosine 551) interacts with cyanocob(III)alamin. 3 beta stranded membrane passes run 558–572, 585–596, and 602–614; these read TVKMGGVSLWDLAVA, IANLFDKDYETV, and AGREYTLSGSYTF. Residues 597-614 carry the TonB C-terminal box motif; it reads YGYQTAGREYTLSGSYTF.

It belongs to the TonB-dependent receptor family. BtuB (TC 1.B.14.3.1) subfamily.

The protein localises to the cell outer membrane. Involved in the active translocation of vitamin B12 (cyanocobalamin) across the outer membrane to the periplasmic space. It derives its energy for transport by interacting with the trans-periplasmic membrane protein TonB. In Escherichia coli O6:K15:H31 (strain 536 / UPEC), this protein is Vitamin B12 transporter BtuB.